The chain runs to 527 residues: Peptide chain release factor 3 (527 aa).

The 269-residue stretch at 9 to 277 (AKRRTFAIIS…AVVDWAPRPL (269 aa)) folds into the tr-type G domain. GTP contacts are provided by residues 18-25 (SHPDAGKT), 86-90 (DTPGH), and 140-143 (NKLD).

It belongs to the TRAFAC class translation factor GTPase superfamily. Classic translation factor GTPase family. PrfC subfamily.

The protein resides in the cytoplasm. Its function is as follows. Increases the formation of ribosomal termination complexes and stimulates activities of RF-1 and RF-2. It binds guanine nucleotides and has strong preference for UGA stop codons. It may interact directly with the ribosome. The stimulation of RF-1 and RF-2 is significantly reduced by GTP and GDP, but not by GMP. This Pseudomonas putida (strain W619) protein is Peptide chain release factor 3.